The primary structure comprises 210 residues: Large ribosomal subunit protein bL25 (210 aa).

The disordered stretch occupies residues 190-210; sequence LKSEGAEGGEAEAGQAEEGEE. The span at 196 to 210 shows a compositional bias: acidic residues; that stretch reads EGGEAEAGQAEEGEE.

Belongs to the bacterial ribosomal protein bL25 family. CTC subfamily. As to quaternary structure, part of the 50S ribosomal subunit; part of the 5S rRNA/L5/L18/L25 subcomplex. Contacts the 5S rRNA. Binds to the 5S rRNA independently of L5 and L18.

In terms of biological role, this is one of the proteins that binds to the 5S RNA in the ribosome where it forms part of the central protuberance. This is Large ribosomal subunit protein bL25 from Chelativorans sp. (strain BNC1).